The primary structure comprises 1249 residues: Fanconi anemia group J protein (1249 aa).

Residues 11 to 442 form the Helicase ATP-binding domain; the sequence is GGVKIYFPYK…KDHEPLRAVC (432 aa). A compositionally biased stretch (polar residues) spans 102 to 127; the sequence is QGTSRHFNYPSTPPSERNGTSSTCQD. A disordered region spans residues 102 to 131; sequence QGTSRHFNYPSTPPSERNGTSSTCQDSPEK. Residues 158–175 carry the Nuclear localization signal motif; the sequence is KKRIRPLETTQQIRKRHC. 185 to 192 lines the ATP pocket; it reads AKVDSGKT. [4Fe-4S] cluster contacts are provided by Cys-283, Cys-298, Cys-310, and Cys-350. Positions 393-396 match the DEAH box motif; that stretch reads DEAH. Phosphoserine is present on residues Ser-505, Ser-927, Ser-930, Ser-956, Ser-990, Ser-1004, and Ser-1032. Positions 888 to 1063 are interaction with BRCA1; the sequence is HQKVLNVSIK…ESSNLTVNTS (176 aa). Disordered regions lie at residues 1018 to 1042 and 1108 to 1127; these read KATP…EKME and VSEE…EAED. A compositionally biased stretch (polar residues) spans 1023–1032; sequence LGSSENSASS. Residues 1110–1122 show a composition bias toward basic and acidic residues; sequence EEDKQSTSNRDFE. Ser-1237 carries the post-translational modification Phosphoserine. Position 1249 is an N6-acetyllysine (Lys-1249).

This sequence belongs to the DEAD box helicase family. DEAH subfamily. Interacts with the replication protein A complex (RPA) via the RPA1 subunit; following DNA damage they colocalize in foci in the nucleus. Binds directly to the BRCT domains of BRCA1. Interacts with the CIA complex components CIAO1, CIAO2B and MMS19. [4Fe-4S] cluster serves as cofactor. In terms of processing, phosphorylated. Phosphorylation is necessary for interaction with BRCA1, and is cell-cycle regulated. Post-translationally, acetylation at Lys-1249 facilitates DNA end processing required for repair and checkpoint signaling. Ubiquitously expressed, with highest levels in testis.

It is found in the nucleus. The protein localises to the cytoplasm. It carries out the reaction Couples ATP hydrolysis with the unwinding of duplex DNA at the replication fork by translocating in the 5'-3' direction. This creates two antiparallel DNA single strands (ssDNA). The leading ssDNA polymer is the template for DNA polymerase III holoenzyme which synthesizes a continuous strand.. The catalysed reaction is ATP + H2O = ADP + phosphate + H(+). Helicase activity on forked substrates is stimulated by replication protein A complex heterotrimer (RPA1, RPA2, RPA3). Helicase activity on G-quadruplex DNA is stimulated 3-fold by RPA, and inhibited by MSH2/MSH6. Unwinding of G-quadruplex DNA is inhibited by ATP-gamma-S and telomestatin (TMS); TMA does not inhibit unwinding of forked-duplex DNA. Helicase activity on dsDNA and G-quadruplex DNA is inhibited by porphyrin derivatives meso-tetra (N-methyl-4-pyridyl) porphine tetra tosylate (T4) and N-methyl mesoporphyrin IX (NMM). In terms of biological role, DNA-dependent ATPase and 5'-3' DNA helicase required for the maintenance of chromosomal stability. Acts late in the Fanconi anemia pathway, after FANCD2 ubiquitination. Involved in the repair of DNA double-strand breaks by homologous recombination in a manner that depends on its association with BRCA1. Involved in the repair of abasic sites at replication forks by promoting the degradation of DNA-protein cross-links: acts by catalyzing unfolding of HMCES DNA-protein cross-link via its helicase activity, exposing the underlying DNA and enabling cleavage of the DNA-protein adduct by the SPRTN metalloprotease. Can unwind RNA:DNA substrates. Unwinds G-quadruplex DNA; unwinding requires a 5'-single stranded tail. The protein is Fanconi anemia group J protein of Homo sapiens (Human).